The primary structure comprises 845 residues: Dynein axonemal assembly factor 5 (845 aa).

8 HEAT repeats span residues 47 to 84, 138 to 175, 180 to 217, 260 to 297, 332 to 369, 523 to 561, 674 to 715, and 766 to 803; these read DVFD…SLPP, ECYP…LADT, PFTE…HMDA, SFFE…QYFN, QRSL…HAEA, NFGQ…LDAA, SESV…MSVE, and AIVK…SHPE.

This sequence belongs to the DNAAF5 family. Expressed in testis.

Its subcellular location is the cytoplasm. It is found in the dynein axonemal particle. Cytoplasmic protein involved in the delivery of the dynein machinery to the motile cilium. It is required for the assembly of the axonemal dynein inner and outer arms, two structures attached to the peripheral outer doublet A microtubule of the axoneme, that play a crucial role in cilium motility. The polypeptide is Dynein axonemal assembly factor 5 (Drosophila melanogaster (Fruit fly)).